A 92-amino-acid chain; its full sequence is Putative regulatory protein CA_C1717 (92 aa).

This sequence belongs to the RemA family.

This chain is Putative regulatory protein CA_C1717, found in Clostridium acetobutylicum (strain ATCC 824 / DSM 792 / JCM 1419 / IAM 19013 / LMG 5710 / NBRC 13948 / NRRL B-527 / VKM B-1787 / 2291 / W).